Here is a 280-residue protein sequence, read N- to C-terminus: Probable aquaporin PIP2-8 (280 aa).

The interval 1–21 (MAAGSGSGSNPKDYQDPPPAP) is disordered. 2 helical membrane-spanning segments follow: residues 36–56 (AAIAEFTATLLLVCISVSTVI) and 70–92 (LGIAWAFGGLIFVLVYCTAGISG). The NPA 1 motif lies at 96-98 (NPA). 3 helical membrane passes run 113–135 (RAALYTMAQCVGAVCGAGLARAM), 156–176 (SAGAGVVAEMVGTFVLVYTVF), and 192–212 (VLAPLPIGLAVLVVHLATIPI). The NPA 2 signature appears at 218 to 220 (NPA). The chain crosses the membrane as a helical span at residues 236-256 (AWSHLWIFWVGPFAGAAAAMI).

The protein belongs to the MIP/aquaporin (TC 1.A.8) family. PIP (TC 1.A.8.11) subfamily. In terms of tissue distribution, expressed in leaves and at lower levels in roots.

It is found in the cell membrane. In terms of biological role, aquaporins facilitate the transport of water and small neutral solutes across cell membranes. The chain is Probable aquaporin PIP2-8 (PIP2-8) from Oryza sativa subsp. japonica (Rice).